Consider the following 575-residue polypeptide: Isocitrate dehydrogenase kinase/phosphatase (575 aa).

ATP contacts are provided by residues 315–321 (APGVKGM) and Lys-336. Asp-371 is a catalytic residue.

This sequence belongs to the AceK family.

The protein resides in the cytoplasm. It carries out the reaction L-seryl-[isocitrate dehydrogenase] + ATP = O-phospho-L-seryl-[isocitrate dehydrogenase] + ADP + H(+). Its function is as follows. Bifunctional enzyme which can phosphorylate or dephosphorylate isocitrate dehydrogenase (IDH) on a specific serine residue. This is a regulatory mechanism which enables bacteria to bypass the Krebs cycle via the glyoxylate shunt in response to the source of carbon. When bacteria are grown on glucose, IDH is fully active and unphosphorylated, but when grown on acetate or ethanol, the activity of IDH declines drastically concomitant with its phosphorylation. The polypeptide is Isocitrate dehydrogenase kinase/phosphatase (Yersinia enterocolitica serotype O:8 / biotype 1B (strain NCTC 13174 / 8081)).